Here is a 127-residue protein sequence, read N- to C-terminus: Small ribosomal subunit protein uS11 (127 aa).

This sequence belongs to the universal ribosomal protein uS11 family. In terms of assembly, part of the 30S ribosomal subunit. Interacts with proteins S7 and S18. Binds to IF-3.

In terms of biological role, located on the platform of the 30S subunit, it bridges several disparate RNA helices of the 16S rRNA. Forms part of the Shine-Dalgarno cleft in the 70S ribosome. The sequence is that of Small ribosomal subunit protein uS11 from Anaeromyxobacter dehalogenans (strain 2CP-C).